The sequence spans 206 residues: Large ribosomal subunit protein uL3 (206 aa).

This sequence belongs to the universal ribosomal protein uL3 family. Part of the 50S ribosomal subunit. Forms a cluster with proteins L14 and L19.

In terms of biological role, one of the primary rRNA binding proteins, it binds directly near the 3'-end of the 23S rRNA, where it nucleates assembly of the 50S subunit. The sequence is that of Large ribosomal subunit protein uL3 from Cytophaga hutchinsonii (strain ATCC 33406 / DSM 1761 / CIP 103989 / NBRC 15051 / NCIMB 9469 / D465).